The primary structure comprises 733 residues: Ribosomal protein S6 kinase 2 alpha (733 aa).

The interval 18 to 38 (EDPENGHGSPEEGGRHTSKDE) is disordered. Positions 62–321 (FVLLKVLGQG…AEEIKRQPFF (260 aa)) constitute a Protein kinase 1 domain. ATP-binding positions include 68–76 (LGQGSFGKV) and Lys-94. Residue Asp-187 is the Proton acceptor of the active site. Ser-221 is subject to Phosphoserine. The AGC-kinase C-terminal domain maps to 322-391 (STIDWNKLFR…VAPALVEEDA (70 aa)). Thr-359 carries the phosphothreonine modification. Residue Ser-363 is modified to Phosphoserine. Ser-380 bears the Phosphoserine; by autocatalysis mark. Residues 416 to 673 (YTVRETIGVG…AKQVLQHEWI (258 aa)) enclose the Protein kinase 2 domain. ATP contacts are provided by residues 422–430 (IGVGSYSVC) and Lys-445. Asp-533 (proton acceptor) is an active-site residue. Phosphothreonine is present on Thr-571. The residue at position 730 (Ser-730) is a Phosphoserine.

The protein belongs to the protein kinase superfamily. AGC Ser/Thr protein kinase family. S6 kinase subfamily. Mg(2+) serves as cofactor. In terms of processing, autophosphorylated on Ser-380, as part of the activation process.

The enzyme catalyses L-seryl-[protein] + ATP = O-phospho-L-seryl-[protein] + ADP + H(+). The catalysed reaction is L-threonyl-[protein] + ATP = O-phospho-L-threonyl-[protein] + ADP + H(+). Its activity is regulated as follows. Activated by multiple phosphorylations on threonine and serine residues. Its function is as follows. Serine/threonine kinase that may play a role in mediating the growth-factor and stress induced activation of transcription. This is Ribosomal protein S6 kinase 2 alpha (rps6ka) from Xenopus laevis (African clawed frog).